A 93-amino-acid chain; its full sequence is Co-chaperonin GroES (93 aa).

The protein belongs to the GroES chaperonin family. As to quaternary structure, heptamer of 7 subunits arranged in a ring. Interacts with the chaperonin GroEL.

It is found in the cytoplasm. Functionally, together with the chaperonin GroEL, plays an essential role in assisting protein folding. The GroEL-GroES system forms a nano-cage that allows encapsulation of the non-native substrate proteins and provides a physical environment optimized to promote and accelerate protein folding. GroES binds to the apical surface of the GroEL ring, thereby capping the opening of the GroEL channel. The sequence is that of Co-chaperonin GroES from Streptococcus sanguinis.